The primary structure comprises 195 residues: Probable DNA-directed RNA polymerase subunit delta (195 aa).

An HTH HARE-type domain is found at 14–83 (LSMIEVARAI…GDNKWGLRSW (70 aa)). 2 stretches are compositionally biased toward acidic residues: residues 120 to 138 (DSDA…DAYE) and 145 to 195 (YDDE…TSEE). Residues 120 to 195 (DSDAIDYNAD…SDDDAETSEE (76 aa)) are disordered.

It belongs to the RpoE family. As to quaternary structure, RNAP is composed of a core of 2 alpha, a beta and a beta' subunits. The core is associated with a delta subunit and one of several sigma factors.

Participates in both the initiation and recycling phases of transcription. In the presence of the delta subunit, RNAP displays an increased specificity of transcription, a decreased affinity for nucleic acids, and an increased efficiency of RNA synthesis because of enhanced recycling. In Streptococcus pneumoniae serotype 2 (strain D39 / NCTC 7466), this protein is Probable DNA-directed RNA polymerase subunit delta.